A 159-amino-acid chain; its full sequence is 3-hydroxyacyl-[acyl-carrier-protein] dehydratase FabZ (159 aa).

Residue His-58 is part of the active site.

Belongs to the thioester dehydratase family. FabZ subfamily.

It is found in the cytoplasm. It carries out the reaction a (3R)-hydroxyacyl-[ACP] = a (2E)-enoyl-[ACP] + H2O. In terms of biological role, involved in unsaturated fatty acids biosynthesis. Catalyzes the dehydration of short chain beta-hydroxyacyl-ACPs and long chain saturated and unsaturated beta-hydroxyacyl-ACPs. The chain is 3-hydroxyacyl-[acyl-carrier-protein] dehydratase FabZ from Helicobacter pylori (strain G27).